The following is an 860-amino-acid chain: Alanine--tRNA ligase (860 aa).

4 residues coordinate Zn(2+): H553, H557, C655, and H659.

This sequence belongs to the class-II aminoacyl-tRNA synthetase family. Zn(2+) is required as a cofactor.

It is found in the cytoplasm. The catalysed reaction is tRNA(Ala) + L-alanine + ATP = L-alanyl-tRNA(Ala) + AMP + diphosphate. In terms of biological role, catalyzes the attachment of alanine to tRNA(Ala) in a two-step reaction: alanine is first activated by ATP to form Ala-AMP and then transferred to the acceptor end of tRNA(Ala). Also edits incorrectly charged Ser-tRNA(Ala) and Gly-tRNA(Ala) via its editing domain. The polypeptide is Alanine--tRNA ligase (Legionella pneumophila (strain Lens)).